Here is a 366-residue protein sequence, read N- to C-terminus: Alanine racemase (366 aa).

Catalysis depends on lysine 40, which acts as the Proton acceptor; specific for D-alanine. N6-(pyridoxal phosphate)lysine is present on lysine 40. A substrate-binding site is contributed by arginine 136. Tyrosine 263 serves as the catalytic Proton acceptor; specific for L-alanine. Residue methionine 310 coordinates substrate.

The protein belongs to the alanine racemase family. Requires pyridoxal 5'-phosphate as cofactor.

The enzyme catalyses L-alanine = D-alanine. It participates in amino-acid biosynthesis; D-alanine biosynthesis; D-alanine from L-alanine: step 1/1. Catalyzes the interconversion of L-alanine and D-alanine. May also act on other amino acids. In Streptococcus pyogenes serotype M6 (strain ATCC BAA-946 / MGAS10394), this protein is Alanine racemase (alr).